Here is a 153-residue protein sequence, read N- to C-terminus: Cytochrome c-type biogenesis protein CcmE (153 aa).

At 1–6 the chain is on the cytoplasmic side; it reads MNARRR. Residues 7-27 form a helical; Signal-anchor for type II membrane protein membrane-spanning segment; that stretch reads LWSVLMLILAVGTAATLTIMA. The Periplasmic segment spans residues 28-153; it reads LRHNLTYLYM…LDTPIAETTP (126 aa). Heme is bound by residues H121 and Y125. The segment covering 131–141 has biased composition (polar residues); that stretch reads ANKMQPTPTQH. The segment at 131–153 is disordered; that stretch reads ANKMQPTPTQHTHLDTPIAETTP.

It belongs to the CcmE/CycJ family.

It localises to the cell inner membrane. In terms of biological role, heme chaperone required for the biogenesis of c-type cytochromes. Transiently binds heme delivered by CcmC and transfers the heme to apo-cytochromes in a process facilitated by CcmF and CcmH. The sequence is that of Cytochrome c-type biogenesis protein CcmE from Xylella fastidiosa (strain Temecula1 / ATCC 700964).